Consider the following 199-residue polypeptide: Holliday junction branch migration complex subunit RuvA (199 aa).

The tract at residues 1-63 (MIASVRGEVL…EDSMTLYGFT (63 aa)) is domain I. The tract at residues 64-142 (DAETRDLFLT…AAGAAGAPAG (79 aa)) is domain II. Residues 143 to 153 (AARNGHAVRGP) are flexible linker. The segment at 153 to 199 (PVVEALVGLGFAAKQAEEATDKVLAAEPEAGTSGALRAALSLLGKSR) is domain III.

The protein belongs to the RuvA family. Homotetramer. Forms an RuvA(8)-RuvB(12)-Holliday junction (HJ) complex. HJ DNA is sandwiched between 2 RuvA tetramers; dsDNA enters through RuvA and exits via RuvB. An RuvB hexamer assembles on each DNA strand where it exits the tetramer. Each RuvB hexamer is contacted by two RuvA subunits (via domain III) on 2 adjacent RuvB subunits; this complex drives branch migration. In the full resolvosome a probable DNA-RuvA(4)-RuvB(12)-RuvC(2) complex forms which resolves the HJ.

The protein localises to the cytoplasm. Its function is as follows. The RuvA-RuvB-RuvC complex processes Holliday junction (HJ) DNA during genetic recombination and DNA repair, while the RuvA-RuvB complex plays an important role in the rescue of blocked DNA replication forks via replication fork reversal (RFR). RuvA specifically binds to HJ cruciform DNA, conferring on it an open structure. The RuvB hexamer acts as an ATP-dependent pump, pulling dsDNA into and through the RuvAB complex. HJ branch migration allows RuvC to scan DNA until it finds its consensus sequence, where it cleaves and resolves the cruciform DNA. The sequence is that of Holliday junction branch migration complex subunit RuvA from Mycobacterium avium (strain 104).